A 439-amino-acid chain; its full sequence is ATP-dependent protease ATPase subunit HslU (439 aa).

ATP-binding positions include isoleucine 17, 59–64 (GVGKTE), aspartate 251, glutamate 317, and arginine 389.

Belongs to the ClpX chaperone family. HslU subfamily. As to quaternary structure, a double ring-shaped homohexamer of HslV is capped on each side by a ring-shaped HslU homohexamer. The assembly of the HslU/HslV complex is dependent on binding of ATP.

It is found in the cytoplasm. Functionally, ATPase subunit of a proteasome-like degradation complex; this subunit has chaperone activity. The binding of ATP and its subsequent hydrolysis by HslU are essential for unfolding of protein substrates subsequently hydrolyzed by HslV. HslU recognizes the N-terminal part of its protein substrates and unfolds these before they are guided to HslV for hydrolysis. The chain is ATP-dependent protease ATPase subunit HslU from Campylobacter jejuni (strain RM1221).